The sequence spans 292 residues: tRNA (guanine-N(1)-)-methyltransferase (292 aa).

Residues Gly151 and 175–180 (IGDYVL) each bind S-adenosyl-L-methionine.

It belongs to the RNA methyltransferase TrmD family. In terms of assembly, homodimer.

Its subcellular location is the cytoplasm. The catalysed reaction is guanosine(37) in tRNA + S-adenosyl-L-methionine = N(1)-methylguanosine(37) in tRNA + S-adenosyl-L-homocysteine + H(+). Specifically methylates guanosine-37 in various tRNAs. The sequence is that of tRNA (guanine-N(1)-)-methyltransferase from Corynebacterium diphtheriae (strain ATCC 700971 / NCTC 13129 / Biotype gravis).